Here is a 230-residue protein sequence, read N- to C-terminus: Ion-translocating oxidoreductase complex subunit E (230 aa).

6 helical membrane passes run A18–A38, L39–L59, T63–V83, L86–V106, A125–L145, and P182–V202.

This sequence belongs to the NqrDE/RnfAE family. The complex is composed of six subunits: RnfA, RnfB, RnfC, RnfD, RnfE and RnfG.

The protein resides in the cell inner membrane. Part of a membrane-bound complex that couples electron transfer with translocation of ions across the membrane. In Citrobacter koseri (strain ATCC BAA-895 / CDC 4225-83 / SGSC4696), this protein is Ion-translocating oxidoreductase complex subunit E.